A 319-amino-acid polypeptide reads, in one-letter code: ATP-dependent 6-phosphofructokinase (319 aa).

Gly11 serves as a coordination point for ATP. Residue 21-25 (RAVTR) participates in ADP binding. ATP contacts are provided by residues 72 to 73 (RF) and 102 to 105 (GDGS). Asp103 contacts Mg(2+). Residue 125 to 127 (SID) coordinates substrate. The active-site Proton acceptor is the Asp127. Arg154 contributes to the ADP binding site. Substrate is bound by residues Arg162 and 169–171 (MGR). Residues 185–187 (GAD) and 213–215 (KKH) each bind ADP. Substrate-binding positions include Glu222, Arg243, and 249–252 (HMQR).

The protein belongs to the phosphofructokinase type A (PFKA) family. ATP-dependent PFK group I subfamily. Prokaryotic clade 'B1' sub-subfamily. In terms of assembly, homotetramer. It depends on Mg(2+) as a cofactor.

It localises to the cytoplasm. It catalyses the reaction beta-D-fructose 6-phosphate + ATP = beta-D-fructose 1,6-bisphosphate + ADP + H(+). It participates in carbohydrate degradation; glycolysis; D-glyceraldehyde 3-phosphate and glycerone phosphate from D-glucose: step 3/4. Allosterically activated by ADP and other diphosphonucleosides, and allosterically inhibited by phosphoenolpyruvate. Catalyzes the phosphorylation of D-fructose 6-phosphate to fructose 1,6-bisphosphate by ATP, the first committing step of glycolysis. The sequence is that of ATP-dependent 6-phosphofructokinase from Lactobacillus gasseri (strain ATCC 33323 / DSM 20243 / BCRC 14619 / CIP 102991 / JCM 1131 / KCTC 3163 / NCIMB 11718 / NCTC 13722 / AM63).